A 306-amino-acid chain; its full sequence is Elongation factor Ts (306 aa).

The segment at 80–83 is involved in Mg(2+) ion dislocation from EF-Tu; it reads TDFV.

The protein belongs to the EF-Ts family.

It is found in the cytoplasm. In terms of biological role, associates with the EF-Tu.GDP complex and induces the exchange of GDP to GTP. It remains bound to the aminoacyl-tRNA.EF-Tu.GTP complex up to the GTP hydrolysis stage on the ribosome. The sequence is that of Elongation factor Ts from Methylorubrum populi (strain ATCC BAA-705 / NCIMB 13946 / BJ001) (Methylobacterium populi).